A 545-amino-acid chain; its full sequence is Glucose-6-phosphate isomerase (545 aa).

Glutamate 351 acts as the Proton donor in catalysis. Catalysis depends on residues histidine 382 and lysine 510.

The protein belongs to the GPI family.

Its subcellular location is the cytoplasm. It catalyses the reaction alpha-D-glucose 6-phosphate = beta-D-fructose 6-phosphate. It functions in the pathway carbohydrate biosynthesis; gluconeogenesis. It participates in carbohydrate degradation; glycolysis; D-glyceraldehyde 3-phosphate and glycerone phosphate from D-glucose: step 2/4. Its function is as follows. Catalyzes the reversible isomerization of glucose-6-phosphate to fructose-6-phosphate. The chain is Glucose-6-phosphate isomerase from Shewanella oneidensis (strain ATCC 700550 / JCM 31522 / CIP 106686 / LMG 19005 / NCIMB 14063 / MR-1).